The chain runs to 160 residues: SsrA-binding protein (160 aa).

It belongs to the SmpB family.

It localises to the cytoplasm. In terms of biological role, required for rescue of stalled ribosomes mediated by trans-translation. Binds to transfer-messenger RNA (tmRNA), required for stable association of tmRNA with ribosomes. tmRNA and SmpB together mimic tRNA shape, replacing the anticodon stem-loop with SmpB. tmRNA is encoded by the ssrA gene; the 2 termini fold to resemble tRNA(Ala) and it encodes a 'tag peptide', a short internal open reading frame. During trans-translation Ala-aminoacylated tmRNA acts like a tRNA, entering the A-site of stalled ribosomes, displacing the stalled mRNA. The ribosome then switches to translate the ORF on the tmRNA; the nascent peptide is terminated with the 'tag peptide' encoded by the tmRNA and targeted for degradation. The ribosome is freed to recommence translation, which seems to be the essential function of trans-translation. This is SsrA-binding protein from Yersinia enterocolitica serotype O:8 / biotype 1B (strain NCTC 13174 / 8081).